Reading from the N-terminus, the 397-residue chain is ATP phosphoribosyltransferase regulatory subunit (397 aa).

It belongs to the class-II aminoacyl-tRNA synthetase family. HisZ subfamily. Heteromultimer composed of HisG and HisZ subunits.

It is found in the cytoplasm. Its pathway is amino-acid biosynthesis; L-histidine biosynthesis; L-histidine from 5-phospho-alpha-D-ribose 1-diphosphate: step 1/9. Its function is as follows. Required for the first step of histidine biosynthesis. May allow the feedback regulation of ATP phosphoribosyltransferase activity by histidine. The polypeptide is ATP phosphoribosyltransferase regulatory subunit (Nitrosococcus oceani (strain ATCC 19707 / BCRC 17464 / JCM 30415 / NCIMB 11848 / C-107)).